Consider the following 383-residue polypeptide: NifS-like protein (383 aa).

Residues 58–59 (SE) and 184–186 (SLN) contribute to the pyridoxal 5'-phosphate site.

Belongs to the class-V pyridoxal-phosphate-dependent aminotransferase family. NifS/IscS subfamily. The cofactor is pyridoxal 5'-phosphate.

The protein resides in the virion. This is NifS-like protein from African swine fever virus (isolate Pig/Kenya/KEN-50/1950) (ASFV).